The chain runs to 596 residues: Glomulin (596 aa).

Ala-2 bears the N-acetylalanine mark. The alpha-helical region with structural similarity to HEAT repeats stretch occupies residues 2–555; that stretch reads AVEELQSIIK…EEIPSMPPEM (554 aa). The segment at 299 to 596 is important for interaction with RBX1; it reads IDQLPMVLSP…STSEENVGIK (298 aa).

In terms of assembly, interacts with FKBP4 and FKBP1A. Interacts with RBX1 (via RING domain). Identified in complexes that contain RBX1 plus one of the cullins CUL1, CUL2, CUL3, and CUL4A. Identified in a SCF complex composed of CUL1, RBX1, SKP1, FBXW7 and GLMN. Component of a SCF-like complex consisting of CUL7, RBX1, SKP1, FBXW8 and GLMN. Interacts with unphosphorylated MET and is released upon MET phosphorylation. Post-translationally, phosphorylated on tyrosine residues. As to expression, ubiquitous. Detected in embryonic vasculature and embryonic perichondrium, and in adult eye, brain, heart, testis, kidney, smooth muscle and skeletal muscle.

Its function is as follows. Regulatory component of cullin-RING-based SCF (SKP1-Cullin-F-box protein) E3 ubiquitin-protein ligase complexes. Inhibits E3 ubiquitin ligase activity by binding to the RING domain of RBX1 and inhibiting its interaction with the E2 ubiquitin-conjugating enzyme CDC34. Inhibits RBX1-mediated neddylation of CUL1. Required for normal stability and normal cellular levels of key components of SCF ubiquitin ligase complexes, including FBXW7, RBX1, CUL1, CUL2, CUL3, CUL4A, and thereby contributes to the regulation of CCNE1 and MYC levels. Essential for normal development of the vasculature. Contributes to the regulation of RPS6KB1 phosphorylation. This is Glomulin (Glmn) from Mus musculus (Mouse).